A 260-amino-acid polypeptide reads, in one-letter code: NH(3)-dependent NAD(+) synthetase (260 aa).

31 to 38 (GLSGGLDS) provides a ligand contact to ATP. Position 37 (Asp-37) interacts with Mg(2+). A deamido-NAD(+)-binding site is contributed by Arg-112. Thr-132 serves as a coordination point for ATP. Glu-137 is a binding site for Mg(2+). ATP-binding residues include Lys-161 and Ser-183.

The protein belongs to the NAD synthetase family. Homodimer.

The enzyme catalyses deamido-NAD(+) + NH4(+) + ATP = AMP + diphosphate + NAD(+) + H(+). The protein operates within cofactor biosynthesis; NAD(+) biosynthesis; NAD(+) from deamido-NAD(+) (ammonia route): step 1/1. Catalyzes the ATP-dependent amidation of deamido-NAD to form NAD. Uses ammonia as a nitrogen source. The sequence is that of NH(3)-dependent NAD(+) synthetase from Helicobacter pylori (strain G27).